We begin with the raw amino-acid sequence, 437 residues long: Nuclear hormone receptor family member nhr-28 (437 aa).

Positions 5–80 (KSPCSVCGEA…VGMRKSAVQR (76 aa)) form a DNA-binding region, nuclear receptor. 2 NR C4-type zinc fingers span residues 8–28 (CSVC…CRAC) and 44–68 (CRAM…FTKC). Positions 115–376 (YEETGMPTLS…ETFYELVSGR (262 aa)) constitute an NR LBD domain.

This sequence belongs to the nuclear hormone receptor family. As to expression, expressed in the pharynx, intestine and hypodermis.

It is found in the nucleus. Functionally, orphan nuclear receptor. This is Nuclear hormone receptor family member nhr-28 (nhr-28) from Caenorhabditis elegans.